We begin with the raw amino-acid sequence, 1438 residues long: DNA polymerase III PolC-type (1438 aa).

The 157-residue stretch at 422-578 folds into the Exonuclease domain; sequence YVVFDVETTG…YDTEATAYIF (157 aa).

It belongs to the DNA polymerase type-C family. PolC subfamily.

It is found in the cytoplasm. It catalyses the reaction DNA(n) + a 2'-deoxyribonucleoside 5'-triphosphate = DNA(n+1) + diphosphate. Its function is as follows. Required for replicative DNA synthesis. This DNA polymerase also exhibits 3' to 5' exonuclease activity. This chain is DNA polymerase III PolC-type, found in Staphylococcus aureus (strain Mu3 / ATCC 700698).